The primary structure comprises 683 residues: Glucosylceramidase (683 aa).

Glu-254 (proton donor) is an active-site residue. Glu-483 (nucleophile) is an active-site residue.

Belongs to the glycosyl hydrolase 5 (cellulase A) family.

It is found in the membrane. It catalyses the reaction a beta-D-glucosyl-(1&lt;-&gt;1')-N-acylsphing-4-enine + H2O = an N-acylsphing-4-enine + D-glucose. Inhibited by metal cations Co(2+), Cu(2+), Ni(2+), Pb(2+) and Zn(2+). Not inhibited by metal chelator ethylenediaminetetraacetic acid (EDTA). Its function is as follows. Specifically hydrolyzes the glucosidic linkage in glucosylceramide. May prevent accumulation of aberrent glucosylceramide containing immature ceramide. The chain is Glucosylceramidase from Rhizopus delemar (strain RA 99-880 / ATCC MYA-4621 / FGSC 9543 / NRRL 43880) (Mucormycosis agent).